We begin with the raw amino-acid sequence, 36 residues long: Probable non-specific lipid-transfer protein (36 aa).

Belongs to the plant LTP family. Phosphorylated by Ca(2+)-dependent protein kinase.

Functionally, plant non-specific lipid-transfer proteins transfer phospholipids as well as galactolipids across membranes. May play a role in wax or cutin deposition in the cell walls of expanding epidermal cells and certain secretory tissues. This chain is Probable non-specific lipid-transfer protein, found in Pinus pinea (Italian stone pine).